The chain runs to 89 residues: cAMP-regulated phosphoprotein 21 (89 aa).

The segment at 1-89 (MSEPGDLSQT…GGESLQDQTL (89 aa)) is disordered. Ser2 carries the N-acetylserine modification. A phosphoserine mark is found at Ser33 and Ser56.

As to quaternary structure, interacts with CALM1. In terms of processing, phosphorylation at Ser-56 favors interaction with CALM1.

It localises to the cytoplasm. Its function is as follows. May act as a competitive inhibitor of calmodulin-dependent enzymes such as calcineurin in neurons. The polypeptide is cAMP-regulated phosphoprotein 21 (ARPP21) (Bos taurus (Bovine)).